Here is a 315-residue protein sequence, read N- to C-terminus: Probable inactive acetaldehyde dehydrogenase 1 (315 aa).

Residues 14–17 (SGDV) and N288 contribute to the NAD(+) site.

Belongs to the acetaldehyde dehydrogenase family.

The protein is Probable inactive acetaldehyde dehydrogenase 1 of Mycolicibacterium vanbaalenii (strain DSM 7251 / JCM 13017 / BCRC 16820 / KCTC 9966 / NRRL B-24157 / PYR-1) (Mycobacterium vanbaalenii).